We begin with the raw amino-acid sequence, 41 residues long: Large ribosomal subunit protein bL36 (41 aa).

This sequence belongs to the bacterial ribosomal protein bL36 family.

This Hyphomonas neptunium (strain ATCC 15444) protein is Large ribosomal subunit protein bL36.